A 120-amino-acid chain; its full sequence is Protein VraC (120 aa).

The sequence is that of Protein VraC from Staphylococcus epidermidis (strain ATCC 12228 / FDA PCI 1200).